The primary structure comprises 126 residues: MPTINQLVRKGRASETTKSKSPALQDCPQRRGVCTRVYTTTPKKPNSALRKVAKVRLTNGFEVISYIGGEGHNLQEHSVVLIRGGRVKDLPGVRYHMVRGSLDTQGVKDRKQARSKYGAKRAKAAK.

The disordered stretch occupies residues 1–26; it reads MPTINQLVRKGRASETTKSKSPALQD. A 3-methylthioaspartic acid modification is found at D89. The disordered stretch occupies residues 101 to 126; it reads SLDTQGVKDRKQARSKYGAKRAKAAK. A compositionally biased stretch (basic residues) spans 113–126; the sequence is ARSKYGAKRAKAAK.

This sequence belongs to the universal ribosomal protein uS12 family. Part of the 30S ribosomal subunit. Contacts proteins S8 and S17. May interact with IF1 in the 30S initiation complex.

Functionally, with S4 and S5 plays an important role in translational accuracy. Interacts with and stabilizes bases of the 16S rRNA that are involved in tRNA selection in the A site and with the mRNA backbone. Located at the interface of the 30S and 50S subunits, it traverses the body of the 30S subunit contacting proteins on the other side and probably holding the rRNA structure together. The combined cluster of proteins S8, S12 and S17 appears to hold together the shoulder and platform of the 30S subunit. The sequence is that of Small ribosomal subunit protein uS12 from Burkholderia pseudomallei (strain 1106a).